The following is a 545-amino-acid chain: CTP synthase (545 aa).

The tract at residues 1–266 is amidoligase domain; it reads MTTRYIFVTG…DDLVTKRFGL (266 aa). Residue S14 coordinates CTP. S14 contributes to the UTP binding site. Residues 15–20 and D72 each bind ATP; that span reads SLGKGI. Residues D72 and E140 each coordinate Mg(2+). CTP-binding positions include 147–149, 187–192, and K223; these read DIE and KTKPTQ. UTP contacts are provided by residues 187–192 and K223; that span reads KTKPTQ. 239 to 241 contributes to the ATP binding site; it reads KDV. A Glutamine amidotransferase type-1 domain is found at 291 to 542; it reads TIGMVGKYTE…VAAAVAYQKR (252 aa). G352 lines the L-glutamine pocket. C379 serves as the catalytic Nucleophile; for glutamine hydrolysis. L-glutamine-binding positions include 380–383, E403, and R470; that span reads LGMQ. Residues H515 and E517 contribute to the active site.

It belongs to the CTP synthase family. Homotetramer.

It carries out the reaction UTP + L-glutamine + ATP + H2O = CTP + L-glutamate + ADP + phosphate + 2 H(+). The catalysed reaction is L-glutamine + H2O = L-glutamate + NH4(+). The enzyme catalyses UTP + NH4(+) + ATP = CTP + ADP + phosphate + 2 H(+). It participates in pyrimidine metabolism; CTP biosynthesis via de novo pathway; CTP from UDP: step 2/2. Its activity is regulated as follows. Allosterically activated by GTP, when glutamine is the substrate; GTP has no effect on the reaction when ammonia is the substrate. The allosteric effector GTP functions by stabilizing the protein conformation that binds the tetrahedral intermediate(s) formed during glutamine hydrolysis. Inhibited by the product CTP, via allosteric rather than competitive inhibition. Catalyzes the ATP-dependent amination of UTP to CTP with either L-glutamine or ammonia as the source of nitrogen. Regulates intracellular CTP levels through interactions with the four ribonucleotide triphosphates. This Shewanella loihica (strain ATCC BAA-1088 / PV-4) protein is CTP synthase.